A 242-amino-acid chain; its full sequence is 1-(5-phosphoribosyl)-5-[(5-phosphoribosylamino)methylideneamino] imidazole-4-carboxamide isomerase (242 aa).

The Proton acceptor role is filled by D8. D129 (proton donor) is an active-site residue.

This sequence belongs to the HisA/HisF family.

Its subcellular location is the cytoplasm. The catalysed reaction is 1-(5-phospho-beta-D-ribosyl)-5-[(5-phospho-beta-D-ribosylamino)methylideneamino]imidazole-4-carboxamide = 5-[(5-phospho-1-deoxy-D-ribulos-1-ylimino)methylamino]-1-(5-phospho-beta-D-ribosyl)imidazole-4-carboxamide. It participates in amino-acid biosynthesis; L-histidine biosynthesis; L-histidine from 5-phospho-alpha-D-ribose 1-diphosphate: step 4/9. The sequence is that of 1-(5-phosphoribosyl)-5-[(5-phosphoribosylamino)methylideneamino] imidazole-4-carboxamide isomerase from Dictyoglomus thermophilum (strain ATCC 35947 / DSM 3960 / H-6-12).